The chain runs to 307 residues: Thymidylate synthase (307 aa).

The interval 1 to 22 is disordered; that stretch reads MLVEGSELQSGAQQPRTEAPQH. Residues 7-16 show a composition bias toward polar residues; it reads ELQSGAQQPR. Arg44 serves as a coordination point for dUMP. Position 108 is a phosphoserine (Ser108). DUMP contacts are provided by residues 169 to 170, 189 to 190, 209 to 212, Asn220, and 250 to 252; these read RR, CH, RSGD, and HIY. Catalysis depends on Cys189, which acts as the Nucleophile. Residue Asp212 participates in (6R)-5,10-methylene-5,6,7,8-tetrahydrofolate binding. Residues Lys286 and Lys302 each participate in a glycyl lysine isopeptide (Lys-Gly) (interchain with G-Cter in SUMO2) cross-link. Residue Ala306 coordinates (6R)-5,10-methylene-5,6,7,8-tetrahydrofolate.

Belongs to the thymidylate synthase family. Homodimer.

It is found in the nucleus. Its subcellular location is the cytoplasm. The protein resides in the mitochondrion. It localises to the mitochondrion matrix. The protein localises to the mitochondrion inner membrane. The enzyme catalyses dUMP + (6R)-5,10-methylene-5,6,7,8-tetrahydrofolate = 7,8-dihydrofolate + dTMP. The protein operates within pyrimidine metabolism; dTTP biosynthesis. Catalyzes the reductive methylation of 2'-deoxyuridine 5'-monophosphate (dUMP) to thymidine 5'-monophosphate (dTMP), using the cosubstrate, 5,10- methylenetetrahydrofolate (CH2H4folate) as a 1-carbon donor and reductant and contributes to the de novo mitochondrial thymidylate biosynthesis pathway. The sequence is that of Thymidylate synthase (Tyms) from Rattus norvegicus (Rat).